The chain runs to 143 residues: Polyadenylate-binding protein-interacting protein 2 (143 aa).

Positions 11–21 match the PAM2-like motif; that stretch reads TLNPNAPVFDP.

This chain is Polyadenylate-binding protein-interacting protein 2 (CID2), found in Arabidopsis thaliana (Mouse-ear cress).